Here is a 395-residue protein sequence, read N- to C-terminus: uncharacterized protein (395 aa).

Residues 247–270 (GGTVVPPNPDQPNPTPPDSSSPNY) form a disordered region. The span at 252 to 265 (PPNPDQPNPTPPDS) shows a compositional bias: pro residues.

This is an uncharacterized protein from Vibrio cholerae serotype O1 (strain ATCC 39315 / El Tor Inaba N16961).